The chain runs to 425 residues: GTPase Obg (425 aa).

The region spanning 1-158 is the Obg domain; that stretch reads MFVDQVKVYV…RYIVMELKLI (158 aa). A disordered region spans residues 118–144; that stretch reads KGGRGGRGNNRFANSSNPAPHISENGE. Residues 159 to 327 form the OBG-type G domain; the sequence is ADVGLVGYPS…LMYAIGDTLA (169 aa). ATP contacts are provided by residues 165–172, 190–194, 211–214, 281–284, and 308–310; these read GYPSVGKS, FTTLT, DLPG, NKME, and SAA. The Mg(2+) site is built by Ser-172 and Thr-192. Positions 348–425 constitute an OCT domain; the sequence is RAEKEPDAFE…IGKLEFDFVE (78 aa).

Belongs to the TRAFAC class OBG-HflX-like GTPase superfamily. OBG GTPase family. Monomer. Mg(2+) serves as cofactor.

It localises to the cytoplasm. Functionally, an essential GTPase which binds GTP, GDP and possibly (p)ppGpp with moderate affinity, with high nucleotide exchange rates and a fairly low GTP hydrolysis rate. Plays a role in control of the cell cycle, stress response, ribosome biogenesis and in those bacteria that undergo differentiation, in morphogenesis control. The chain is GTPase Obg from Brevibacillus brevis (strain 47 / JCM 6285 / NBRC 100599).